Reading from the N-terminus, the 219-residue chain is Phosphatidylserine decarboxylase proenzyme (219 aa).

Serine 188 acts as the Schiff-base intermediate with substrate; via pyruvic acid in catalysis. Serine 188 is modified (pyruvic acid (Ser); by autocatalysis).

The protein belongs to the phosphatidylserine decarboxylase family. PSD-A subfamily. Heterodimer of a large membrane-associated beta subunit and a small pyruvoyl-containing alpha subunit. Requires pyruvate as cofactor. In terms of processing, is synthesized initially as an inactive proenzyme. Formation of the active enzyme involves a self-maturation process in which the active site pyruvoyl group is generated from an internal serine residue via an autocatalytic post-translational modification. Two non-identical subunits are generated from the proenzyme in this reaction, and the pyruvate is formed at the N-terminus of the alpha chain, which is derived from the carboxyl end of the proenzyme. The post-translation cleavage follows an unusual pathway, termed non-hydrolytic serinolysis, in which the side chain hydroxyl group of the serine supplies its oxygen atom to form the C-terminus of the beta chain, while the remainder of the serine residue undergoes an oxidative deamination to produce ammonia and the pyruvoyl prosthetic group on the alpha chain.

It localises to the cell membrane. The enzyme catalyses a 1,2-diacyl-sn-glycero-3-phospho-L-serine + H(+) = a 1,2-diacyl-sn-glycero-3-phosphoethanolamine + CO2. The protein operates within phospholipid metabolism; phosphatidylethanolamine biosynthesis; phosphatidylethanolamine from CDP-diacylglycerol: step 2/2. Its function is as follows. Catalyzes the formation of phosphatidylethanolamine (PtdEtn) from phosphatidylserine (PtdSer). The sequence is that of Phosphatidylserine decarboxylase proenzyme from Geobacter sp. (strain M21).